Here is a 386-residue protein sequence, read N- to C-terminus: Ovalbumin (386 aa).

N-acetylglycine is present on Gly-2. A signal peptide (not cleaved) is located at residues 22–48 (HHANENIFYSPFTIISALAMVYLGAKD). Position 69 is a phosphoserine (Ser-69). A disulfide bridge links Cys-74 with Cys-121. N-linked (GlcNAc...) asparagine glycans are attached at residues Asn-293 and Asn-312. Ser-345 carries the post-translational modification Phosphoserine. Residue Asn-372 is glycosylated (N-linked (GlcNAc...) asparagine).

Belongs to the serpin family. Ov-serpin subfamily. In terms of processing, the signal sequence is not cleaved. The functional signal for membrane translocation of ovalbumin becomes accessible when the nascent chain is 50 to 60 residues long. The hydrophobic sequence which lies between residues 27 and 43 folds back on the preceding residues to form an amphipathic hairpin structure which is the signal element recognized by the membrane. In terms of tissue distribution, major protein of egg white.

It is found in the secreted. Functionally, storage protein of egg white. Lack protease inhibitory activity. The chain is Ovalbumin (SERPINB14) from Meleagris gallopavo (Wild turkey).